Reading from the N-terminus, the 102-residue chain is Small ribosomal subunit protein uS10 (102 aa).

This sequence belongs to the universal ribosomal protein uS10 family. As to quaternary structure, part of the 30S ribosomal subunit.

In terms of biological role, involved in the binding of tRNA to the ribosomes. The polypeptide is Small ribosomal subunit protein uS10 (Methanoregula boonei (strain DSM 21154 / JCM 14090 / 6A8)).